The sequence spans 188 residues: Auxin-induced protein 22C (188 aa).

The EAR-like (transcriptional repression) motif lies at 13–17 (LRLGL). Residues 16–57 (GLPGAGGENNTDKDKNKNKKRVFSDIEGENSSSEEDGKKETK) are disordered. One can recognise a PB1 domain in the interval 79 to 167 (KLYVKVSMDG…KRLRIMKRSD (89 aa)).

It belongs to the Aux/IAA family. Homodimers and heterodimers.

It localises to the nucleus. In terms of biological role, aux/IAA proteins are short-lived transcriptional factors that function as repressors of early auxin response genes at low auxin concentrations. Repression is thought to result from the interaction with auxin response factors (ARFs), proteins that bind to the auxin-responsive promoter element (AuxRE). Formation of heterodimers with ARF proteins may alter their ability to modulate early auxin response genes expression. This Vigna radiata var. radiata (Mung bean) protein is Auxin-induced protein 22C (AUX22C).